The sequence spans 913 residues: Eukaryotic translation initiation factor 3 subunit C (913 aa).

Residues 1-44 (MSRFFTTGSDSESESSLSGEELVTKPVGGNYGKQPLLLSEDEED) are disordered. Residues 8-21 (GSDSESESSLSGEE) show a composition bias toward low complexity. A phosphoserine mark is found at serine 9, serine 11, serine 13, serine 15, serine 16, serine 18, and serine 39. Position 99 is an N6-acetyllysine (lysine 99). 2 disordered regions span residues 157-301 (TSYK…GGEW) and 522-542 (QLTPPEGSSKSEQDQAENEGE). A phosphoserine mark is found at serine 166, serine 178, serine 181, and serine 182. Positions 166–190 (SADEDAEKNEEDSEGSSDEDEDEDG) are enriched in acidic residues. Positions 199 to 216 (KKSEAPSGESRKFLKKMD) are enriched in basic and acidic residues. Residues 217–232 (DEDEDSEDSEDDEDWD) show a composition bias toward acidic residues. A compositionally biased stretch (basic and acidic residues) spans 261 to 278 (PTTDEDKKAAEKKREDKA). Positions 522-531 (QLTPPEGSSK) are enriched in polar residues. Threonine 524 carries the post-translational modification Phosphothreonine. Lysine 643 is modified (N6-acetyllysine). One can recognise a PCI domain in the interval 673-849 (FHLHINLELL…QTVVMHRTEP (177 aa)). Positions 885–913 (FRDQKDGYRKNEGYMRRGGYRQQQSQTAY) are disordered. Residues 886–899 (RDQKDGYRKNEGYM) show a composition bias toward basic and acidic residues. Position 909 is a phosphoserine (serine 909).

Belongs to the eIF-3 subunit C family. Component of the eukaryotic translation initiation factor 3 (eIF-3) complex, which is composed of 13 subunits: EIF3A, EIF3B, EIF3C, EIF3D, EIF3E, EIF3F, EIF3G, EIF3H, EIF3I, EIF3J, EIF3K, EIF3L and EIF3M. The eIF-3 complex appears to include 3 stable modules: module A is composed of EIF3A, EIF3B, EIF3G and EIF3I; module B is composed of EIF3F, EIF3H, and EIF3M; and module C is composed of EIF3C, EIF3D, EIF3E, EIF3K and EIF3L. EIF3C of module C binds EIF3B of module A and EIF3H of module B, thereby linking the three modules. EIF3J is a labile subunit that binds to the eIF-3 complex via EIF3B. The eIF-3 complex interacts with RPS6KB1 under conditions of nutrient depletion. Mitogenic stimulation leads to binding and activation of a complex composed of MTOR and RPTOR, leading to phosphorylation and release of RPS6KB1 and binding of EIF4B to eIF-3. Interacts with ALKBH4, IFIT1 and IFIT2. Interacts with BZW2/5MP1. Phosphorylated. Phosphorylation is enhanced upon serum stimulation.

The protein resides in the cytoplasm. Functionally, component of the eukaryotic translation initiation factor 3 (eIF-3) complex, which is required for several steps in the initiation of protein synthesis. The eIF-3 complex associates with the 40S ribosome and facilitates the recruitment of eIF-1, eIF-1A, eIF-2:GTP:methionyl-tRNAi and eIF-5 to form the 43S pre-initiation complex (43S PIC). The eIF-3 complex stimulates mRNA recruitment to the 43S PIC and scanning of the mRNA for AUG recognition. The eIF-3 complex is also required for disassembly and recycling of post-termination ribosomal complexes and subsequently prevents premature joining of the 40S and 60S ribosomal subunits prior to initiation. The eIF-3 complex specifically targets and initiates translation of a subset of mRNAs involved in cell proliferation, including cell cycling, differentiation and apoptosis, and uses different modes of RNA stem-loop binding to exert either translational activation or repression. This chain is Eukaryotic translation initiation factor 3 subunit C, found in Pongo abelii (Sumatran orangutan).